Reading from the N-terminus, the 354-residue chain is Heme A synthase (354 aa).

8 consecutive transmembrane segments (helical) span residues 21-41 (VAVWLLACCFMVAVMVLLGGL), 106-126 (VWGRLIGVVFGLPFLWLALSG), 139-159 (VFLLGAAQGGMGWFMVKSGLV), 171-191 (AHLALAFLIHGWMFWLALDIL), 212-232 (MLGLTGLVIVTLLFGGLVAGL), 268-288 (VQFGHRTLAEITIVVALVGWF), 304-324 (AVGLMALLQVGLGIGTLVMVV), and 326-346 (VWLASAHQMGAMALLTLCLWA). Histidine 272 lines the heme pocket. Position 332 (histidine 332) interacts with heme.

This sequence belongs to the COX15/CtaA family. Type 2 subfamily. In terms of assembly, interacts with CtaB. Requires heme b as cofactor.

It localises to the cell membrane. The catalysed reaction is Fe(II)-heme o + 2 A + H2O = Fe(II)-heme a + 2 AH2. It participates in porphyrin-containing compound metabolism; heme A biosynthesis; heme A from heme O: step 1/1. In terms of biological role, catalyzes the conversion of heme O to heme A by two successive hydroxylations of the methyl group at C8. The first hydroxylation forms heme I, the second hydroxylation results in an unstable dihydroxymethyl group, which spontaneously dehydrates, resulting in the formyl group of heme A. The chain is Heme A synthase from Paramagnetospirillum magneticum (strain ATCC 700264 / AMB-1) (Magnetospirillum magneticum).